We begin with the raw amino-acid sequence, 263 residues long: Putative 2-aminoethylphosphonate transport system permease protein PhnV (263 aa).

6 helical membrane-spanning segments follow: residues Gly-13–Met-33, Leu-69–Ala-89, Val-104–Phe-124, Met-131–Phe-151, Leu-185–Gly-205, and Asn-233–Met-253. Residues Leu-65–Met-253 form the ABC transmembrane type-1 domain.

Belongs to the binding-protein-dependent transport system permease family.

Its subcellular location is the cell inner membrane. Its function is as follows. Probably part of the PhnSTUV complex (TC 3.A.1.11.5) involved in 2-aminoethylphosphonate import. Probably responsible for the translocation of the substrate across the membrane. In Salmonella typhi, this protein is Putative 2-aminoethylphosphonate transport system permease protein PhnV (phnV).